An 85-amino-acid polypeptide reads, in one-letter code: Colicin-E8 immunity protein in ColE6 (85 aa).

It belongs to the colicins ColE2/ColE8/ColE9 and pyocins S1/S2 family.

The sequence is that of Colicin-E8 immunity protein in ColE6 (imm) from Escherichia coli.